We begin with the raw amino-acid sequence, 464 residues long: Soluble pyridine nucleotide transhydrogenase (464 aa).

35 to 44 (EASSQVGGSC) lines the FAD pocket.

Belongs to the class-I pyridine nucleotide-disulfide oxidoreductase family. Requires FAD as cofactor.

The protein resides in the cytoplasm. The enzyme catalyses NAD(+) + NADPH = NADH + NADP(+). Functionally, conversion of NADPH, generated by peripheral catabolic pathways, to NADH, which can enter the respiratory chain for energy generation. This Marinomonas sp. (strain MWYL1) protein is Soluble pyridine nucleotide transhydrogenase.